Here is a 987-residue protein sequence, read N- to C-terminus: Nuclear matrix constituent protein 1b (987 aa).

The tract at residues 1–25 (MASPRSAGGVGGGGGGGGGSGGAAA) is disordered. A compositionally biased stretch (gly residues) spans 8–24 (GGVGGGGGGGGGSGGAA). 2 coiled-coil regions span residues 403-545 (LAEL…ERRA) and 594-717 (LSKI…DREA). Basic and acidic residues-rich tracts occupy residues 752–764 (SDINVKDNHHDNS) and 898–908 (CKEHEYGDKGP). Disordered regions lie at residues 752-775 (SDINVKDNHHDNSHSSPKQRFGRK) and 887-987 (HDEA…FLIT). Residues 944-954 (ATVSATETSNV) are compositionally biased toward polar residues. Over residues 956-973 (GPEDNNDSDEEDEEEEEE) the composition is skewed to acidic residues.

This sequence belongs to the CRWN family. In terms of assembly, interacts with SWI3C.

It is found in the nucleus matrix. The protein resides in the nucleus lamina. In terms of biological role, architectural component of nuclear structure that plays different roles in controlling nuclear size and morphology. Involved in the modification of chromatin accessibility by interacting with SWI3C, a component of the chromatin-remodeling complex, to thus reduce the suppression effect of the complex. Acts as positive regulator of drought resistance and modulates root growth. Positively regulates the expression of genes related to root growth and drought resistance. In Oryza sativa subsp. japonica (Rice), this protein is Nuclear matrix constituent protein 1b.